Consider the following 360-residue polypeptide: Arginase, non-hepatic 1 (360 aa).

Positions 122, 145, 147, and 149 each coordinate Mn(2+). Substrate-binding positions include 147 to 151, 158 to 160, and D204; these read HADIN and SGN. Positions 253 and 255 each coordinate Mn(2+). 2 residues coordinate substrate: T267 and E298.

Belongs to the arginase family. As to quaternary structure, homotrimer. Requires Mn(2+) as cofactor. In terms of tissue distribution, expressed at differing tadpole stages in tail, intestine, hindlimb and trunk region. Most abundant in tadpole tail.

The catalysed reaction is L-arginine + H2O = urea + L-ornithine. The protein operates within nitrogen metabolism; urea cycle; L-ornithine and urea from L-arginine: step 1/1. In terms of biological role, as well as its role in the urea cycle, may be involved in tissue remodeling. The chain is Arginase, non-hepatic 1 (arg2-a) from Xenopus laevis (African clawed frog).